The chain runs to 360 residues: MKKKVIVGMSGGVDSSVAALLLKEQGYEVVGLFMKNWEDDDTDEYCPAKQDLIDAAAVADKIGIELEAVNFSKEYKERVFANFLEEYSAGRTPNPDILCNSEIKFKAFLDHAMALGGDLMATGHYAQVREKNGLFQLMKADDGTKDQSYFLYRLNQAQLSKTLFPLGHLLKREIRDIARRAGLPTSEKKDSTGICFIGERPFQEFLSRYLPRAPGEIQTPEGKVVGQHHGLMYYTMGQRQGLGIGGSKDSNGEPWFVAGKDMQRNVLIVVQGHDHPLLLNDGLIADNLHWIAGEEPKTHWVYAAKTRYRQPDAPCEIDRLDSGTAEIRFGHKQWAITPGQSVVVYESNVCLGGGIITSAL.

Residues 8–15 (GMSGGVDS) and M34 contribute to the ATP site. The tract at residues 94 to 96 (NPD) is interaction with target base in tRNA. C99 (nucleophile) is an active-site residue. An intrachain disulfide couples C99 to C195. G123 provides a ligand contact to ATP. Residues 145-147 (KDQ) are interaction with tRNA. C195 serves as the catalytic Cysteine persulfide intermediate. The interval 307–308 (RY) is interaction with tRNA.

Belongs to the MnmA/TRMU family.

It is found in the cytoplasm. It catalyses the reaction S-sulfanyl-L-cysteinyl-[protein] + uridine(34) in tRNA + AH2 + ATP = 2-thiouridine(34) in tRNA + L-cysteinyl-[protein] + A + AMP + diphosphate + H(+). In terms of biological role, catalyzes the 2-thiolation of uridine at the wobble position (U34) of tRNA, leading to the formation of s(2)U34. This chain is tRNA-specific 2-thiouridylase MnmA, found in Methylobacillus flagellatus (strain ATCC 51484 / DSM 6875 / VKM B-1610 / KT).